A 534-amino-acid chain; its full sequence is (R)-citramalate synthase (534 aa).

In terms of domain architecture, Pyruvate carboxyltransferase spans 11-274 (FHVFDTTLRD…KQVLPEGRLR (264 aa)).

It belongs to the alpha-IPM synthase/homocitrate synthase family.

The catalysed reaction is pyruvate + acetyl-CoA + H2O = (3R)-citramalate + CoA + H(+). Its pathway is amino-acid biosynthesis; L-isoleucine biosynthesis; 2-oxobutanoate from pyruvate: step 1/3. Catalyzes the condensation of pyruvate and acetyl-coenzyme A to form (R)-citramalate. The sequence is that of (R)-citramalate synthase from Streptomyces coelicolor (strain ATCC BAA-471 / A3(2) / M145).